A 493-amino-acid chain; its full sequence is Ecdysteroid UDP-glucosyltransferase (493 aa).

A signal peptide spans 1–17; the sequence is MIFILLTTLLAVGGAQT.

It belongs to the UDP-glycosyltransferase family.

Catalyzes the transfer of glucose from UDP-glucose to ecdysteroids which are insect molting hormones. Expression of egt interferes with normal insect development and block molting. The polypeptide is Ecdysteroid UDP-glucosyltransferase (egt) (Choristoneura fumiferana defective polyhedrosis virus (Cfdef)).